Consider the following 672-residue polypeptide: Glycine--tRNA ligase beta subunit (672 aa).

This sequence belongs to the class-II aminoacyl-tRNA synthetase family. Tetramer of two alpha and two beta subunits.

It is found in the cytoplasm. The catalysed reaction is tRNA(Gly) + glycine + ATP = glycyl-tRNA(Gly) + AMP + diphosphate. The sequence is that of Glycine--tRNA ligase beta subunit from Thermotoga petrophila (strain ATCC BAA-488 / DSM 13995 / JCM 10881 / RKU-1).